The chain runs to 164 residues: Cytochrome c-type biogenesis protein CcmE (164 aa).

At 1 to 8 (MNPRRKKR) the chain is on the cytoplasmic side. Residues 9–29 (LTLAVALIGGVAAIASLLLYA) form a helical; Signal-anchor for type II membrane protein membrane-spanning segment. Over 30-164 (LNSNLNLFFT…EDQSKAGGYK (135 aa)) the chain is Periplasmic. Heme-binding residues include H131 and Y135. The segment at 140 to 164 (VAEAMGQSHEKLDYSEDQSKAGGYK) is disordered. Over residues 147–158 (SHEKLDYSEDQS) the composition is skewed to basic and acidic residues.

The protein belongs to the CcmE/CycJ family.

It localises to the cell inner membrane. Its function is as follows. Heme chaperone required for the biogenesis of c-type cytochromes. Transiently binds heme delivered by CcmC and transfers the heme to apo-cytochromes in a process facilitated by CcmF and CcmH. This is Cytochrome c-type biogenesis protein CcmE from Shewanella piezotolerans (strain WP3 / JCM 13877).